A 520-amino-acid chain; its full sequence is Zinc finger and BTB domain-containing protein 18 (520 aa).

The 68-residue stretch at 24-91 folds into the BTB domain; that stretch reads CDCTVLVGDA…MYEGILQFKG (68 aa). The interval 121-140 is disordered; it reads ATTDSTKKEEDTSSFSDKVE. C2H2-type zinc fingers lie at residues 368-390, 408-430, 436-458, and 464-487; these read FMCP…LSTH, PTCS…ERTH, YTCT…AVVH, and HACK…RKFH.

The protein belongs to the krueppel C2H2-type zinc-finger protein family. ZBTB18 subfamily.

It localises to the nucleus. In terms of biological role, transcriptional repressor that plays a role in various developmental processes. Specifically binds the consensus DNA sequence 5'-[AC]ACATCTG[GT][AC]-3' which contains the E box core, and acts by recruiting chromatin remodeling multiprotein complexes. This is Zinc finger and BTB domain-containing protein 18 (zbtb18) from Xenopus laevis (African clawed frog).